The primary structure comprises 375 residues: Trans-enoyl reductase cghC (375 aa).

Residue 48–51 coordinates NADP(+); the sequence is VDTK. 135-142 serves as a coordination point for substrate; it reads NAWYTSGW. NADP(+)-binding positions include 188–191, 211–214, and 276–277; these read SSST, SARN, and LD. 297–301 serves as a coordination point for substrate; that stretch reads GPELV. Residue 366 to 367 coordinates NADP(+); the sequence is VS.

The protein belongs to the zinc-containing alcohol dehydrogenase family. Monomer.

It carries out the reaction (2S,4S)-4-hydroxy-4-methylglutamate + 8 malonyl-CoA + 3 S-adenosyl-L-methionine + ATP + 8 NADPH + 11 H(+) = (2S)-3-[(2S)-3,5-dioxo-4-[(2E,4R,6R,8E,10E,12E)-4,6,12-trimethyltetradeca-2,8,10,12-tetraenoyl]pyrrolidin-2-yl]-2-hydroxy-2-methylpropanoate + AMP + 3 S-adenosyl-L-homocysteine + 8 CO2 + diphosphate + 8 NADP(+) + 8 CoA + 6 H2O. It functions in the pathway secondary metabolite biosynthesis. Its function is as follows. Trans-enoyl reductase; part of the gene cluster that mediates the biosynthesis of the tetramic acid Sch210972, a potential anti-HIV fungal natural product that contains a decalin core. The PKS module of cghG together with the enoylreductase cghC catalyze the formation of the polyketide unit which is then conjugated to 4-hydroxyl-4-methyl glutamate (HMG) by the condensation domain of the cghG NRPS module. One unique structural feature of Sch210972 is the tetramic acid motif proposed to be derived from the non-proteinogenic amino acid HMG, by a Dieckmann-type condensation catalyzed by the reductase domain of cghG. The aldolase cghB catalyzes the aldol condensation of 2 molecules of pyruvic acid to yield the intermediate 4-hydroxyl-4-methyl-2-oxoglutarate (HMOG), which can then be stereoselectively transaminated by an unidentified enzyme to form HMG. The Diels-Alderase cghA then uses the Dieckmann product released by cghG as substrate and catalyzes the Diels-Alder cycloaddition to form the decalin ring of Sch210972. CghA also suppresses the nonenzymatic formation of the alternative stereoisomer. The chain is Trans-enoyl reductase cghC from Chaetomium globosum (strain ATCC 6205 / CBS 148.51 / DSM 1962 / NBRC 6347 / NRRL 1970) (Soil fungus).